Reading from the N-terminus, the 625-residue chain is tRNA uridine 5-carboxymethylaminomethyl modification enzyme MnmG (625 aa).

FAD is bound by residues 13-18, Val125, and Ser182; that span reads GGGHAG. Residue 276-290 coordinates NAD(+); the sequence is GPRYCPSIEDKITRF. Gln373 contacts FAD.

Belongs to the MnmG family. As to quaternary structure, homodimer. Heterotetramer of two MnmE and two MnmG subunits. Requires FAD as cofactor.

The protein localises to the cytoplasm. NAD-binding protein involved in the addition of a carboxymethylaminomethyl (cmnm) group at the wobble position (U34) of certain tRNAs, forming tRNA-cmnm(5)s(2)U34. In Lactococcus lactis subsp. lactis (strain IL1403) (Streptococcus lactis), this protein is tRNA uridine 5-carboxymethylaminomethyl modification enzyme MnmG.